Reading from the N-terminus, the 171-residue chain is Small ribosomal subunit protein uS4 (171 aa).

Positions 101 to 165 (RRLQTVVYRK…SSLSDELHPE (65 aa)) constitute an S4 RNA-binding domain. A disordered region spans residues 148–171 (SSVGFDEHSSLSDELHPERAEAQE). Basic and acidic residues predominate over residues 152-171 (FDEHSSLSDELHPERAEAQE).

Belongs to the universal ribosomal protein uS4 family. Part of the 30S ribosomal subunit. Contacts protein S5. The interaction surface between S4 and S5 is involved in control of translational fidelity.

In terms of biological role, one of the primary rRNA binding proteins, it binds directly to 16S rRNA where it nucleates assembly of the body of the 30S subunit. With S5 and S12 plays an important role in translational accuracy. In Haloarcula marismortui (strain ATCC 43049 / DSM 3752 / JCM 8966 / VKM B-1809) (Halobacterium marismortui), this protein is Small ribosomal subunit protein uS4.